The primary structure comprises 1170 residues: NPC intracellular sterol transporter 1-related protein 1 (1170 aa).

The signal sequence occupies residues 1 to 19 (MNVLWIIALVGQLMRLVQG). 8 cysteine pairs are disulfide-bonded: C23-C75, C29-C41, C64-C110, C76-C114, C98-C230, C101-C156, C223-C235, and C232-C239. N-linked (GlcNAc...) asparagine glycosylation is found at N123, N145, and N178. The chain crosses the membrane as a helical span at residues 260-280 (LSVLIFYTICALFAFMWYYLC). N314 is a glycosylation site (N-linked (GlcNAc...) asparagine). A helical membrane pass occupies residues 341–361 (ILITTVFSIFVFSFIIFQYAT). N-linked (GlcNAc...) asparagine glycosylation is present at N401. Intrachain disulfides connect C438–C447 and C473–C480. N-linked (GlcNAc...) asparagine glycosylation is present at N513. 6 consecutive transmembrane segments (helical) span residues 556 to 576 (NDIS…TWAL), 585 to 605 (LLLG…AAGF), 616 to 636 (IIAE…IFLI), 667 to 687 (ILMS…VTMP), 698 to 718 (VSVI…LSLY), and 752 to 772 (IIII…EIQF). An SSD domain is found at 557 to 717 (DISTVAISYL…LTAYVSILSL (161 aa)). Intrachain disulfides connect C822-C828, C868-C925, C869-C891, and C879-C888. N-linked (GlcNAc...) asparagine glycans are attached at residues N900 and N940. A run of 5 helical transmembrane segments spans residues 1000–1020 (LTLK…SVFL), 1027–1047 (FLLA…MALL), 1054–1074 (VSLV…VHIV), 1099–1119 (IGES…CVLA), and 1133–1153 (MWFT…PALL).

This sequence belongs to the patched family.

Its subcellular location is the vacuole membrane. Functionally, involved in sphingolipid trafficking. May recycle sphingolipids between cellular membranous compartments. The polypeptide is NPC intracellular sterol transporter 1-related protein 1 (Saccharomyces cerevisiae (strain ATCC 204508 / S288c) (Baker's yeast)).